The sequence spans 1476 residues: ABC transporter G family member 17 (1476 aa).

Disordered regions lie at residues 13-45 and 68-91; these read SENNNNNNNNNNNNNNNNNNNLNNNNDNDYDYD and FREIDGGKNNNNHDIELGERKPEN. Residues 14–67 adopt a coiled-coil conformation; the sequence is ENNNNNNNNNNNNNNNNNNNLNNNNDNDYDYDSINNIEEKFENVSKELEGQSIK. Over residues 15 to 39 the composition is skewed to low complexity; the sequence is NNNNNNNNNNNNNNNNNNNLNNNND. The 252-residue stretch at 151–402 folds into the ABC transporter 1 domain; sequence LNPFNYFKKD…FLDLGFDCEP (252 aa). In terms of domain architecture, ABC transmembrane type-2 1 spans 507 to 751; it reads WGDKFTLTSR…SLSVKGENYL (245 aa). 5 helical membrane passes run 517–537, 547–567, 592–612, 623–643, and 764–784; these read FLTILVLSFIFGGIYFQQPLT, AIFTSIIFNCILTQGELHGAL, ILIDIPFILVQVFLHSFIVYF, FFIFCFTLVGVSLSSASLFRG, and LNVVVIFLFWLFYIGLNLFAV. An ABC transporter 2 domain is found at 838 to 1082; sequence FSWKSISYTV…LTSYFERHGV (245 aa). 874–881 contributes to the ATP binding site; the sequence is GSSGAGKT. Transmembrane regions (helical) follow at residues 1182–1202, 1219–1239, 1260–1280, 1298–1318, 1322–1342, and 1450–1470; these read FYTMGSFAQSAVSGLVIGFTF, SWEAMILGVLLIYLVLPMFFI, LSMIAVEIPYVVLSSTLFFIA, WLMHTMFSVYIVSFAQALGAA, IAISIAALPIVLFYLFLLCGV, and FGIIVAYWGSSILAVLFFVYL. The ABC transmembrane type-2 2 domain occupies 1182–1405; the sequence is FYTMGSFAQS…TDCQTYSAPF (224 aa).

It belongs to the ABC transporter superfamily. ABCG family. PDR (TC 3.A.1.205) subfamily.

It is found in the membrane. This is ABC transporter G family member 17 (abcG17-1) from Dictyostelium discoideum (Social amoeba).